A 99-amino-acid polypeptide reads, in one-letter code: Large ribosomal subunit protein uL23 (99 aa).

Belongs to the universal ribosomal protein uL23 family. As to quaternary structure, part of the 50S ribosomal subunit. Contacts protein L29, and trigger factor when it is bound to the ribosome.

Functionally, one of the early assembly proteins it binds 23S rRNA. One of the proteins that surrounds the polypeptide exit tunnel on the outside of the ribosome. Forms the main docking site for trigger factor binding to the ribosome. The protein is Large ribosomal subunit protein uL23 of Haemophilus influenzae (strain 86-028NP).